The primary structure comprises 335 residues: 2-acylglycerol O-acyltransferase 1 (335 aa).

2 helical membrane-spanning segments follow: residues 24–44 (WVFS…CLVL) and 47–67 (VWLL…TPQA). N-linked (GlcNAc...) asparagine glycans are attached at residues asparagine 125 and asparagine 180.

It belongs to the diacylglycerol acyltransferase family.

Its subcellular location is the endoplasmic reticulum membrane. It carries out the reaction a 2-acylglycerol + an acyl-CoA = a 1,2-diacylglycerol + CoA. It catalyses the reaction a 2-acylglycerol + an acyl-CoA = a 1,2-diacyl-sn-glycerol + CoA. The enzyme catalyses a 2-acylglycerol + an acyl-CoA = a 2,3-diacyl-sn-glycerol + CoA. The catalysed reaction is a 1-acylglycerol + an acyl-CoA = a 1,2-diacylglycerol + CoA. It carries out the reaction a 1-acylglycerol + an acyl-CoA = a 1,3-diacylglycerol + CoA. It catalyses the reaction a 1-acyl-sn-glycerol + an acyl-CoA = a 1,3-diacyl-sn-glycerol + CoA. The enzyme catalyses a 3-acyl-sn-glycerol + an acyl-CoA = a 1,3-diacyl-sn-glycerol + CoA. It participates in glycerolipid metabolism; triacylglycerol biosynthesis. Functionally, involved in glycerolipid synthesis and lipid metabolism. Catalyzes the formation of diacylglycerol, the precursor of triacylglycerol, by transferring the acyl chain of a fatty acyl-CoA to a monoacylglycerol, mainly at the sn-1 or sn-3 positions. It uses both sn-2-monoacylglycerol (2-acylglycerol) and sn-1-monoacylglycerol (1-acyl-sn-glycerol) equally well as substrates, and uses sn-3-monoacylglycerol (3-acyl-sn-glycerol) with lower efficiency. The protein is 2-acylglycerol O-acyltransferase 1 (mogat1) of Xenopus laevis (African clawed frog).